The chain runs to 466 residues: E3 SUMO-protein ligase TRIM60 (466 aa).

Residues 15–56 form an RING-type zinc finger; the sequence is CYICSDFMEDPVTSRCGHNFCFACLRLLWDDLQGNIFCPVCQ. Residues 91–132 form a B box-type zinc finger; sequence EEHTVCPKHDQPLVLFCVRDRDVLCTQCSLSVEHQGHYTCPI. Residues cysteine 96, histidine 99, cysteine 118, and histidine 124 each contribute to the Zn(2+) site. Residues 171–223 are a coiled coil; it reads LREEAQYQKIEIRYEIGQIKLFLQSEYEAHLNESHMEELRSFSELNGYLETLL. The 191-residue stretch at 272 to 462 folds into the B30.2/SPRY domain; that stretch reads LSLPAQYSGL…LEILTHPTPD (191 aa).

It belongs to the TRIM/RBCC family.

Functionally, E3 SUMO-protein ligase that mediates SUMOylation of TAB2 leading to inhibition of NF-kappa-B and MAPK pathways by suppressing the TRAF6/TAB2/TAK1 complex. In Mus musculus (Mouse), this protein is E3 SUMO-protein ligase TRIM60 (Trim60).